A 339-amino-acid chain; its full sequence is D-alanine--D-alanine ligase (339 aa).

Positions 126-333 constitute an ATP-grasp domain; it reads KQVLASVGMP…YSELVTRLVE (208 aa). 158–213 provides a ligand contact to ATP; it reads AGELGYPLFVKPANLGSSVGISKVSGPGELERALDLAFSLGRRVILEAMTAHKPRE. Aspartate 286, glutamate 300, and asparagine 302 together coordinate Mg(2+).

The protein belongs to the D-alanine--D-alanine ligase family. Mg(2+) is required as a cofactor. Mn(2+) serves as cofactor.

The protein localises to the cytoplasm. The enzyme catalyses 2 D-alanine + ATP = D-alanyl-D-alanine + ADP + phosphate + H(+). The protein operates within cell wall biogenesis; peptidoglycan biosynthesis. In terms of biological role, cell wall formation. The sequence is that of D-alanine--D-alanine ligase from Deinococcus geothermalis (strain DSM 11300 / CIP 105573 / AG-3a).